Here is a 1361-residue protein sequence, read N- to C-terminus: Xanthine dehydrogenase 1 (1361 aa).

Positions 15–101 (TEALLYVNGV…GMHVISIEGL (87 aa)) constitute a 2Fe-2S ferredoxin-type domain. Residues Cys-53, Cys-58, Cys-61, Cys-83, Cys-123, Cys-126, Cys-159, and Cys-161 each coordinate [2Fe-2S] cluster. One can recognise an FAD-binding PCMH-type domain in the interval 257–442 (RGNGGITWYR…LSVFLPWTRP (186 aa)). Residues 285-292 (LLVGNTEV), Phe-365, 375-379 (CIGGN), Asp-388, Leu-432, and Lys-450 contribute to the FAD site. Gln-796 and Phe-827 together coordinate Mo-molybdopterin. Substrate contacts are provided by Glu-831 and Arg-909. Arg-941 provides a ligand contact to Mo-molybdopterin. Residues Phe-943 and Thr-1039 each contribute to the substrate site. Mo-molybdopterin is bound at residue Ala-1108. The Proton acceptor role is filled by Glu-1297.

This sequence belongs to the xanthine dehydrogenase family. Homodimer. It depends on [2Fe-2S] cluster as a cofactor. Requires FAD as cofactor. Mo-molybdopterin is required as a cofactor. In terms of tissue distribution, expressed in roots, leaves, stems, flowers and siliques.

The catalysed reaction is xanthine + NAD(+) + H2O = urate + NADH + H(+). It carries out the reaction hypoxanthine + NAD(+) + H2O = xanthine + NADH + H(+). Key enzyme involved in purine catabolism. Catalyzes the oxidation of hypoxanthine to xanthine and the oxidation of xanthine to urate. Regulates the level of ureides and plays an important role during plant growth and development, senescence and response to stresses. Possesses NADH oxidase activity and may contribute to the generation of superoxide anions in planta. The protein is Xanthine dehydrogenase 1 (XDH1) of Arabidopsis thaliana (Mouse-ear cress).